The primary structure comprises 66 residues: Probable Sec-independent protein translocase protein TatE (66 aa).

The helical transmembrane segment at 1 to 21 threads the bilayer; sequence MEGISITKLLVIAVLIVLLFG. The segment at 46 to 66 is disordered; sequence ETPAAKKSDGAEAAPRVENKE.

It belongs to the TatA/E family. TatE subfamily.

It is found in the cell inner membrane. Part of the twin-arginine translocation (Tat) system that transports large folded proteins containing a characteristic twin-arginine motif in their signal peptide across membranes. TatE shares overlapping functions with TatA. The protein is Probable Sec-independent protein translocase protein TatE of Edwardsiella piscicida.